The sequence spans 332 residues: ATP-dependent 6-phosphofructokinase (332 aa).

Gly11 serves as a coordination point for ATP. 21–25 (RSVVR) lines the ADP pocket. ATP-binding positions include 72-73 (RC) and 102-105 (GDGS). Asp103 contributes to the Mg(2+) binding site. Substrate is bound at residue 126–128 (TID). Asp128 acts as the Proton acceptor in catalysis. Arg155 lines the ADP pocket. Substrate contacts are provided by residues Arg163 and 170-172 (MGR). Residues 186 to 188 (GAE), Arg212, and 214 to 216 (KLH) contribute to the ADP site. Residues Glu223, Arg256, and 262 to 265 (HIQR) each bind substrate.

The protein belongs to the phosphofructokinase type A (PFKA) family. ATP-dependent PFK group I subfamily. Prokaryotic clade 'B1' sub-subfamily. Homotetramer. Requires Mg(2+) as cofactor.

It is found in the cytoplasm. The catalysed reaction is beta-D-fructose 6-phosphate + ATP = beta-D-fructose 1,6-bisphosphate + ADP + H(+). It functions in the pathway carbohydrate degradation; glycolysis; D-glyceraldehyde 3-phosphate and glycerone phosphate from D-glucose: step 3/4. Its activity is regulated as follows. Allosterically activated by ADP and other diphosphonucleosides, and allosterically inhibited by phosphoenolpyruvate. In terms of biological role, catalyzes the phosphorylation of D-fructose 6-phosphate to fructose 1,6-bisphosphate by ATP, the first committing step of glycolysis. This is ATP-dependent 6-phosphofructokinase from Halothermothrix orenii (strain H 168 / OCM 544 / DSM 9562).